A 245-amino-acid polypeptide reads, in one-letter code: Probable phosphatase KPK_3500 (245 aa).

The Zn(2+) site is built by histidine 7, histidine 9, histidine 15, histidine 40, glutamate 73, histidine 101, histidine 131, aspartate 192, and histidine 194.

Belongs to the PHP family. In terms of assembly, homotrimer. Zn(2+) serves as cofactor.

In Klebsiella pneumoniae (strain 342), this protein is Probable phosphatase KPK_3500.